The sequence spans 71 residues: ATP synthase F(0) complex subunit e, mitochondrial (71 aa).

Lys-34 is modified (N6-acetyllysine).

This sequence belongs to the ATPase e subunit family. As to quaternary structure, component of the ATP synthase complex composed at least of ATP5F1A/subunit alpha, ATP5F1B/subunit beta, ATP5MC1/subunit c (homooctomer), MT-ATP6/subunit a, MT-ATP8/subunit 8, ATP5ME/subunit e, ATP5MF/subunit f, ATP5MG/subunit g, ATP5MK/subunit k, ATP5MJ/subunit j, ATP5F1C/subunit gamma, ATP5F1D/subunit delta, ATP5F1E/subunit epsilon, ATP5PF/subunit F6, ATP5PB/subunit b, ATP5PD/subunit d, ATP5PO/subunit OSCP. ATP synthase complex consists of a soluble F(1) head domain (subunits alpha(3) and beta(3)) - the catalytic core - and a membrane F(0) domain - the membrane proton channel (subunits c, a, 8, e, f, g, k and j). These two domains are linked by a central stalk (subunits gamma, delta, and epsilon) rotating inside the F1 region and a stationary peripheral stalk (subunits F6, b, d, and OSCP).

The protein localises to the mitochondrion. Its subcellular location is the mitochondrion inner membrane. Its function is as follows. Subunit e, of the mitochondrial membrane ATP synthase complex (F(1)F(0) ATP synthase or Complex V) that produces ATP from ADP in the presence of a proton gradient across the membrane which is generated by electron transport complexes of the respiratory chain. ATP synthase complex consist of a soluble F(1) head domain - the catalytic core - and a membrane F(1) domain - the membrane proton channel. These two domains are linked by a central stalk rotating inside the F(1) region and a stationary peripheral stalk. During catalysis, ATP synthesis in the catalytic domain of F(1) is coupled via a rotary mechanism of the central stalk subunits to proton translocation. In vivo, can only synthesize ATP although its ATP hydrolase activity can be activated artificially in vitro. Part of the complex F(0) domain. The protein is ATP synthase F(0) complex subunit e, mitochondrial of Bos taurus (Bovine).